The chain runs to 488 residues: Putative BTB/POZ domain-containing protein L674 (488 aa).

Residues 83–150 enclose the BTB domain; the sequence is NIVYFNIGGK…VKNQKCPINN (68 aa).

Belongs to the mimivirus BTB/WD family.

The chain is Putative BTB/POZ domain-containing protein L674 from Acanthamoeba polyphaga (Amoeba).